The following is a 539-amino-acid chain: Protein PNS1 (539 aa).

The disordered stretch occupies residues 1 to 38; it reads MPLNEKYERPPQPPPAYDPNHRPPSSSENSAAANVNDG. Over 1–81 the chain is Cytoplasmic; that stretch reads MPLNEKYERP…NDNKPRWNDW (81 aa). The segment covering 25–36 has biased composition (low complexity); sequence SSSENSAAANVN. A helical transmembrane segment spans residues 82–102; it reads PFTIFFLCTVGGFIAIAAITL. The Extracellular segment spans residues 103–129; sequence RAWSQTYSSTGSGIYDGVNTGTLNTNA. The chain crosses the membrane as a helical span at residues 130-150; the sequence is AILLVFVCIIALVFSVLGLTL. Residues 151 to 157 lie on the Cytoplasmic side of the membrane; it reads CRIFPKQ. Residues 158-178 traverse the membrane as a helical segment; sequence FIYCGMVINLVASLGTAIMYM. The Extracellular segment spans residues 179–182; that stretch reads SLRY. A helical membrane pass occupies residues 183–203; the sequence is WSAGIVFLVFTFMTAWCYWGM. At 204 to 226 the chain is on the cytoplasmic side; that stretch reads RSRIPLSVAVLKVVVDAMKKCPQ. The chain crosses the membrane as a helical span at residues 227–247; that stretch reads IFFVSFVGALVASAFGFLFSA. The Extracellular portion of the chain corresponds to 248-274; sequence VIVATYIKYDPNSSNGGCDVSGGSCSH. The N-linked (GlcNAc...) asparagine glycan is linked to Asn259. A helical transmembrane segment spans residues 275–295; that stretch reads SKLIGVLVVVFFCGYYISEVI. The Cytoplasmic portion of the chain corresponds to 296–332; it reads RNVIHCVISGVFGSWYYMSKSDQGMPRWPAFGALKRA. The chain crosses the membrane as a helical span at residues 333 to 353; the sequence is MTYSFGSICFGSLLVALIDLL. Residues 354–371 lie on the Extracellular side of the membrane; sequence RQILQMIRHDVTSSGGGQ. A helical membrane pass occupies residues 372–392; the sequence is IAIQILFMVFDWIIGFLKWLA. Topologically, residues 393–436 are cytoplasmic; the sequence is EYFNHYAYSFIALYGKPYLRAAKETWYMLREKGMDALINDNLIN. Residues 437-457 form a helical membrane-spanning segment; that stretch reads IALGLFSMFASYMTALFTFLY. Residues 458 to 473 are Extracellular-facing; that stretch reads LRFTSPQYNSNGAYNG. The chain crosses the membrane as a helical span at residues 474–494; that stretch reads ALMAFSFVIALQICNIATEAI. At 495–539 the chain is on the cytoplasmic side; it reads RSGTATFFVALGNDPEVFHHSYPHRFDEIFRAYPDVLRKLSHQNV.

This sequence belongs to the CTL (choline transporter-like) family.

Its subcellular location is the cell membrane. Functionally, probably involved in transport through the plasma membrane. The protein is Protein PNS1 (PNS1) of Saccharomyces cerevisiae (strain ATCC 204508 / S288c) (Baker's yeast).